The chain runs to 158 residues: Cyclic pyranopterin monophosphate synthase (158 aa).

Substrate contacts are provided by residues 76-78 (LCH) and 114-115 (ME). The active site involves Asp-129.

The protein belongs to the MoaC family. As to quaternary structure, homohexamer; trimer of dimers.

The enzyme catalyses (8S)-3',8-cyclo-7,8-dihydroguanosine 5'-triphosphate = cyclic pyranopterin phosphate + diphosphate. It functions in the pathway cofactor biosynthesis; molybdopterin biosynthesis. Its function is as follows. Catalyzes the conversion of (8S)-3',8-cyclo-7,8-dihydroguanosine 5'-triphosphate to cyclic pyranopterin monophosphate (cPMP). The chain is Cyclic pyranopterin monophosphate synthase from Shewanella baltica (strain OS223).